The following is a 436-amino-acid chain: UPF0597 protein YhaM (436 aa).

Belongs to the UPF0597 family.

The sequence is that of UPF0597 protein YhaM from Salmonella dublin (strain CT_02021853).